Reading from the N-terminus, the 903-residue chain is Immunoglobulin superfamily member 22 (903 aa).

4 Ig-like domains span residues 67 to 158, 232 to 322, 418 to 508, and 606 to 696; these read PEFV…LLVT, EAIR…AELT, PIKF…AIVT, and PSVL…LHLS. 2 consecutive Fibronectin type-III domains span residues 703 to 798 and 804 to 898; these read FASQ…AKDP and LVQD…MPPP.

The polypeptide is Immunoglobulin superfamily member 22 (IGSF22) (Homo sapiens (Human)).